A 121-amino-acid polypeptide reads, in one-letter code: Small ribosomal subunit protein uS13 (121 aa).

The interval 91–121 (HRRGLPVRGQNSKNNARTRKGPRRTVANKKK) is disordered. Residues 106–121 (ARTRKGPRRTVANKKK) are compositionally biased toward basic residues.

It belongs to the universal ribosomal protein uS13 family. As to quaternary structure, part of the 30S ribosomal subunit. Forms a loose heterodimer with protein S19. Forms two bridges to the 50S subunit in the 70S ribosome.

In terms of biological role, located at the top of the head of the 30S subunit, it contacts several helices of the 16S rRNA. In the 70S ribosome it contacts the 23S rRNA (bridge B1a) and protein L5 of the 50S subunit (bridge B1b), connecting the 2 subunits; these bridges are implicated in subunit movement. Contacts the tRNAs in the A and P-sites. The protein is Small ribosomal subunit protein uS13 of Bacillus cereus (strain G9842).